The chain runs to 547 residues: bZIP transcription factor 29 (547 aa).

3 disordered regions span residues 1–199, 244–312, and 333–356; these read MGDT…SGGE, NSSE…DIAP, and GDESLKPPPSPGSMSRKVSPTNSV. Polar residues predominate over residues 15-52; that stretch reads LHSSFGTTSSSIPKNPISQLDLNPNFIRSSAPQFSKPF. Over residues 63–73 the composition is skewed to pro residues; sequence PSHPNLIPPTS. The segment covering 74–89 has biased composition (polar residues); that stretch reads PFSQIPTTRQPGSHNF. The span at 120 to 132 shows a compositional bias: basic and acidic residues; the sequence is FRDHDVSMEDRDS. Residues 134–157 show a composition bias toward polar residues; the sequence is VFNSNHSLPPSPFTRCNSTSSSSL. Basic and acidic residues predominate over residues 249–263; sequence DDSKNGNENRDDMES. Residues 264–275 show a composition bias toward polar residues; that stretch reads SRASGTKTNGSD. A compositionally biased stretch (low complexity) spans 279–294; that stretch reads ESSSVNESANNNMNSS. Residues 344–356 are compositionally biased toward polar residues; sequence GSMSRKVSPTNSV. The region spanning 394 to 457 is the bZIP domain; sequence DPKRVKRILA…MGLTNQNNEL (64 aa). The basic motif stretch occupies residues 396 to 417; it reads KRVKRILANRQSAARSKERKMR. The stretch at 416–469 forms a coiled coil; the sequence is MRYIVELEHKVQTLQTEATTLSAQLTLLQRDMMGLTNQNNELKFRLQAMEQQAR. Residues 422-457 are leucine-zipper; that stretch reads LEHKVQTLQTEATTLSAQLTLLQRDMMGLTNQNNEL. Residues 517-535 are compositionally biased toward low complexity; the sequence is QLRQQPQQMQQQSHQQNHQ. The segment at 517–547 is disordered; that stretch reads QLRQQPQQMQQQSHQQNHQNGTMATKSESNE. The span at 536–547 shows a compositional bias: polar residues; that stretch reads NGTMATKSESNE.

In terms of assembly, forms homodimers. As to expression, expressed in roots, leaves and flowers. Expressed in the root tips, lateral root primordia, and guard cells of leaves, hypocotyls and anthers.

The protein resides in the cytoplasm. It is found in the nucleus. Transcription factor that acts as a repressor of reproductive development, meristem size and plant growth. Regulates meristem size, cell size and cell number during plant development. Binds to the promoters of the cell cycle regulators CYCB1-2 and SMR4, and genes involved in cell wall organization, such as XTH9, EXPA1 and EXPA3. Possesses transactivation activity in yeast. Possesses transactivation activity in plant protoplasts. Plays a role in abiotic stress response by binding to the 5'-CAGCTG-3' DNA sequence found in the promoters of MYB44 and TRX8. Plays a role in osmosensory response by binding to the 5'-AGCTGT/G-3' DNA sequence found in the promoters of the hypoosmolarity-responsive genes CYP707A1 and CYP707A3. Binds to the 5'-AGCTGT-3' DNA sequence found in the promoter of the ZAT1 gene in response to abiotic stresses, such as oxidative stress, high-light, osmotic shock, salt and heat stresses. This is bZIP transcription factor 29 from Arabidopsis thaliana (Mouse-ear cress).